The sequence spans 239 residues: Major prion protein (239 aa).

An N-terminal signal peptide occupies residues 1–15; the sequence is MLVLFVATWSDLGLC. Residues 15–98 form a disordered region; it reads CKKRPKPGGW…NQWNKPSKPK (84 aa). Residues 16 to 31 are interaction with ADGRG6; sequence KKRPKPGGWNTGGSRY. An interaction with GRB2, ERI3 and SYN1 region spans residues 16-222; it reads KKRPKPGGWN…ESQAYYQRGS (207 aa). A run of 5 repeats spans residues 44–51, 52–59, 60–67, 68–75, and 76–83. The tract at residues 44–83 is 5 X 8 AA tandem repeats of P-H-G-G-G-W-G-Q; that stretch reads PQSGGWGQPHGGGWGQPHGGGWGQPHGGGWGQPHGGGWGQ. Gly residues predominate over residues 47 to 87; that stretch reads GGWGQPHGGGWGQPHGGGWGQPHGGGWGQPHGGGWGQGGGT. His53, Gly54, Gly55, His61, Gly62, Gly63, His69, Gly70, Gly71, His77, Gly78, and Gly79 together coordinate Cu(2+). Cys171 and Cys206 are joined by a disulfide. N-linked (GlcNAc...) asparagine glycans are attached at residues Asn173 and Asn189. A lipid anchor (GPI-anchor amidated serine) is attached at Ser222. A propeptide spans 223 to 239 (removed in mature form); sequence SMVLFSSPPVILLISFL.

This sequence belongs to the prion family. In terms of assembly, monomer and homodimer. Has a tendency to aggregate into amyloid fibrils containing a cross-beta spine, formed by a steric zipper of superposed beta-strands. Soluble oligomers may represent an intermediate stage on the path to fibril formation. Copper binding may promote oligomerization. Interacts with GRB2, APP, ERI3/PRNPIP and SYN1. Mislocalized cytosolically exposed PrP interacts with MGRN1; this interaction alters MGRN1 subcellular location and causes lysosomal enlargement. Interacts with APP. Interacts with KIAA1191. Interacts with ADGRG6.

It localises to the cell membrane. The protein localises to the golgi apparatus. In terms of biological role, its primary physiological function is unclear. May play a role in neuronal development and synaptic plasticity. May be required for neuronal myelin sheath maintenance. May promote myelin homeostasis through acting as an agonist for ADGRG6 receptor. May play a role in iron uptake and iron homeostasis. Soluble oligomers are toxic to cultured neuroblastoma cells and induce apoptosis (in vitro). Association with GPC1 (via its heparan sulfate chains) targets PRNP to lipid rafts. Also provides Cu(2+) or Zn(2+) for the ascorbate-mediated GPC1 deaminase degradation of its heparan sulfate side chains. This is Major prion protein (PRNP) from Aotus trivirgatus (Three-striped night monkey).